The primary structure comprises 224 residues: Cytidylate kinase (224 aa).

11 to 19 (GPAGAGKST) is a binding site for ATP.

The protein belongs to the cytidylate kinase family. Type 1 subfamily.

It is found in the cytoplasm. The catalysed reaction is CMP + ATP = CDP + ADP. The enzyme catalyses dCMP + ATP = dCDP + ADP. The polypeptide is Cytidylate kinase (Exiguobacterium sp. (strain ATCC BAA-1283 / AT1b)).